Consider the following 449-residue polypeptide: Glutamate--tRNA ligase 2 (449 aa).

Residues 17–27 carry the 'HIGH' region motif; that stretch reads PSPTGFLHVGN. The 'KMSKS' region motif lies at 248 to 252; the sequence is ALSKR. Lys-251 is a binding site for ATP.

The protein belongs to the class-I aminoacyl-tRNA synthetase family. Glutamate--tRNA ligase type 1 subfamily. In terms of assembly, monomer.

The protein resides in the cytoplasm. The enzyme catalyses tRNA(Glu) + L-glutamate + ATP = L-glutamyl-tRNA(Glu) + AMP + diphosphate. In terms of biological role, catalyzes the attachment of glutamate to tRNA(Glu) in a two-step reaction: glutamate is first activated by ATP to form Glu-AMP and then transferred to the acceptor end of tRNA(Glu). The polypeptide is Glutamate--tRNA ligase 2 (Jannaschia sp. (strain CCS1)).